Reading from the N-terminus, the 414-residue chain is Putative dipeptidase TRV_05564 (414 aa).

Residues 1–20 form the signal peptide; it reads MAALFVSLLALTSLVPVQGA. 3 residues coordinate Zn(2+): histidine 45, aspartate 47, and glutamate 157. A disulfide bridge connects residues cysteine 96 and cysteine 186. Histidine 184 contributes to the substrate binding site. Positions 228 and 249 each coordinate Zn(2+). Positions 260 and 320 each coordinate substrate. Asparagine 392 is a glycosylation site (N-linked (GlcNAc...) asparagine).

This sequence belongs to the metallo-dependent hydrolases superfamily. Peptidase M19 family. Zn(2+) is required as a cofactor.

It carries out the reaction an L-aminoacyl-L-amino acid + H2O = 2 an L-alpha-amino acid. Functionally, hydrolyzes a wide range of dipeptides. The sequence is that of Putative dipeptidase TRV_05564 from Trichophyton verrucosum (strain HKI 0517).